The chain runs to 281 residues: Insulin-like growth factor-binding protein 7 (281 aa).

Residues 1 to 25 (MERPPRALLLGAAGLLLLLLPLSSS) form the signal peptide. Residues 27 to 113 (SSDACGPCVP…PATLAVCVCK (87 aa)) form the IGFBP N-terminal domain. 8 disulfide bridges follow: cysteine 31–cysteine 56, cysteine 34–cysteine 58, cysteine 39–cysteine 59, cysteine 47–cysteine 62, cysteine 70–cysteine 86, cysteine 80–cysteine 110, cysteine 112–cysteine 130, and cysteine 119–cysteine 155. Residues 98-157 (GAAAGGPATLAVCVCKSRYPVCGSNGITYPSGCQLRAASLRAESRGEKAITQVSKGTCEQ) enclose the Kazal-like domain. The Ig-like C2-type domain maps to 159-263 (PSIVTPPKDI…GQASAAAKIT (105 aa)). Residue asparagine 170 is glycosylated (N-linked (GlcNAc...) asparagine). Cysteine 180 and cysteine 247 are disulfide-bonded. Position 238 is a phosphoserine (serine 238).

In terms of assembly, may interact with VPS24/CHMP3; the relevance of such interaction however remains unclear. Interacts with CD93; this interaction plays a role in endothelial cells angiogenesis. N-glycosylated. As to expression, expressed at high levels in lung, kidney, small intestine, testis and uterus and at moderate levels in liver.

It is found in the secreted. In terms of biological role, binds IGF1 and IGF2 with a relatively low affinity. Stimulates prostacyclin (PGI2) production. Stimulates cell adhesion. Acts as a ligand for CD93 to play a role in angiogenesis. The sequence is that of Insulin-like growth factor-binding protein 7 (Igfbp7) from Mus musculus (Mouse).